Here is a 378-residue protein sequence, read N- to C-terminus: Glutamate 5-kinase (378 aa).

Residue Lys15 participates in ATP binding. Substrate is bound by residues Ser56, Asp143, and Asn155. 175-176 lines the ATP pocket; that stretch reads SD. The 78-residue stretch at 281 to 358 folds into the PUA domain; sequence KGTLTIDAGA…PDVAVILGIS (78 aa).

It belongs to the glutamate 5-kinase family.

It is found in the cytoplasm. It catalyses the reaction L-glutamate + ATP = L-glutamyl 5-phosphate + ADP. Its pathway is amino-acid biosynthesis; L-proline biosynthesis; L-glutamate 5-semialdehyde from L-glutamate: step 1/2. In terms of biological role, catalyzes the transfer of a phosphate group to glutamate to form L-glutamate 5-phosphate. This is Glutamate 5-kinase from Bradyrhizobium sp. (strain BTAi1 / ATCC BAA-1182).